A 335-amino-acid chain; its full sequence is Probable cytosolic iron-sulfur protein assembly protein Ciao1 (335 aa).

WD repeat units follow at residues 12–51 (GHKG…WSTK), 57–96 (GHKR…FECN), 101–140 (GHEN…EFEC), 146–185 (PHTQ…NDWD), 192–231 (SHTS…NTAG), 250–289 (QHSR…KPDE), and 301–335 (AHDQ…KVSE).

The protein belongs to the WD repeat CIA1 family.

Essential component of the cytosolic iron-sulfur (Fe/S) protein assembly machinery. Required for the maturation of extramitochondrial Fe/S proteins. The polypeptide is Probable cytosolic iron-sulfur protein assembly protein Ciao1 (Drosophila simulans (Fruit fly)).